The sequence spans 389 residues: Cytochrome b (389 aa).

A run of 4 helical transmembrane segments spans residues 32-52, 76-98, 113-133, and 179-199; these read FGSL…FLAM, YILR…VHIG, LWSI…LGYV, and FFSL…AHMI. 2 residues coordinate heme b: histidine 82 and histidine 96. Heme b contacts are provided by histidine 183 and histidine 197. Residue histidine 202 coordinates a ubiquinone. 4 consecutive transmembrane segments (helical) span residues 225–245, 289–309, 322–342, and 349–369; these read FIFK…IIVF, LLGV…PFVD, INMV…LVGA, and FIFL…VIVP.

Belongs to the cytochrome b family. As to quaternary structure, fungal cytochrome b-c1 complex contains 10 subunits; 3 respiratory subunits, 2 core proteins and 5 low-molecular weight proteins. Cytochrome b-c1 complex is a homodimer. Heme b is required as a cofactor.

Its subcellular location is the mitochondrion inner membrane. Functionally, component of the ubiquinol-cytochrome c reductase complex (complex III or cytochrome b-c1 complex) that is part of the mitochondrial respiratory chain. The b-c1 complex mediates electron transfer from ubiquinol to cytochrome c. Contributes to the generation of a proton gradient across the mitochondrial membrane that is then used for ATP synthesis. This Mycena viridimarginata protein is Cytochrome b (COB).